A 295-amino-acid polypeptide reads, in one-letter code: uncharacterized protein (295 aa).

A signal peptide spans Met1–Ala19. Residues Arg275–Lys295 form a disordered region. The span at Asn276–Lys295 shows a compositional bias: low complexity.

This is an uncharacterized protein from Rickettsia conorii (strain ATCC VR-613 / Malish 7).